Here is a 304-residue protein sequence, read N- to C-terminus: MSLMVVSMACVGFFLLQGAWPHEGVHRKPSLLAHPGPLVKSEETVILQCWSDVRFEHFLLHREGKYKDTLHLIGEHHDGVSKANFSIGPMMQDLAGTYRCYGSVTHSPYQLSAPSDPLDIVITGLYEKPSLSAQPGPTVLAGESVTLSCSSRSSYDMYHLSREGEAHERRFSAGPKVNGTFQADFPLGPATHGGTYRCFGSFRDSPYEWSNSSDPLLVSVTGNPSNSWPSPTEPSSKTGNPRHLHVLIGTSVVKIPFTILLFFLLHRWCSNKKNAAVMDQEPAGNRTVNSEDSDEQDHQEVSYA.

A signal peptide spans 1-21; it reads MSLMVVSMACVGFFLLQGAWP. Topologically, residues 22–245 are extracellular; sequence HEGVHRKPSL…SKTGNPRHLH (224 aa). Ig-like C2-type domains follow at residues 42-107 and 142-205; these read EETV…VTHS and GESV…FRDS. 2 cysteine pairs are disulfide-bonded: Cys49/Cys100 and Cys149/Cys198. Residues Asn84, Asn178, and Asn211 are each glycosylated (N-linked (GlcNAc...) asparagine). A disordered region spans residues 220-239; that stretch reads VTGNPSNSWPSPTEPSSKTG. The helical transmembrane segment at 246–265 threads the bilayer; sequence VLIGTSVVKIPFTILLFFLL. Over 266 to 304 the chain is Cytoplasmic; it reads HRWCSNKKNAAVMDQEPAGNRTVNSEDSDEQDHQEVSYA. Positions 280 to 304 are disordered; that stretch reads QEPAGNRTVNSEDSDEQDHQEVSYA.

This sequence belongs to the immunoglobulin superfamily.

The protein localises to the cell membrane. In terms of biological role, receptor on natural killer (NK) cells for HLA-C alleles. Does not inhibit the activity of NK cells. The protein is Killer cell immunoglobulin-like receptor 2DS2 of Homo sapiens (Human).